A 1501-amino-acid chain; its full sequence is Opaque-specific ABC transporter CDR3 (1501 aa).

Residues 1-502 (MAKTSQAEGQ…KRYWDRMRGD (502 aa)) lie on the Cytoplasmic side of the membrane. The tract at residues 58 to 87 (TYTTATMHPNGINPISDKTDPTLDPESPSF) is disordered. In terms of domain architecture, ABC transporter 1 spans 140–395 (KYARNIFNKF…FKKMGFVCQD (256 aa)). A helical transmembrane segment spans residues 503–523 (IIVPLSTVAGNIAMALILSSV). The N-linked (GlcNAc...) asparagine glycan is linked to asparagine 530. The next 5 membrane-spanning stretches (helical) occupy residues 540–560 (VMYY…YNMY), 589–609 (FPLK…MVNF), 614–634 (GAFF…SHLF), 653–673 (LLLF…YMLG), and 755–775 (FGVL…FVQT). The Cytoplasmic portion of the chain corresponds to 776-1175 (NKSSISKGET…LFQQYWRTPS (400 aa)). Residues 840 to 1083 (FHWRNLTYTV…LIEYFERNGA (244 aa)) enclose the ABC transporter 2 domain. 876-883 (GASGAGKT) lines the ATP pocket. A run of 7 helical transmembrane segments spans residues 1176 to 1196 (YIYS…FTYY), 1212 to 1232 (IFSM…LFVT), 1261 to 1281 (IPYQ…PVGL), 1297 to 1317 (LMWL…QFCI), 1325 to 1345 (YAAN…GVIA), 1353 to 1375 (FWVF…SIGL), and 1451 to 1471 (GIFI…YWLF).

Belongs to the ABC transporter superfamily. ABCG family. PDR (TC 3.A.1.205) subfamily.

It localises to the membrane. The sequence is that of Opaque-specific ABC transporter CDR3 (CDR3) from Candida albicans (Yeast).